A 67-amino-acid chain; its full sequence is Large ribosomal subunit protein uL29 (67 aa).

It belongs to the universal ribosomal protein uL29 family. In terms of assembly, part of the 50S ribosomal subunit. Contacts protein L23 and trigger factor when it is complexed with the ribosome.

In terms of biological role, binds the 23S rRNA. One of the proteins that surrounds the polypeptide exit tunnel on the outside of the subunit. The chain is Large ribosomal subunit protein uL29 (rpmC) from Deinococcus radiodurans (strain ATCC 13939 / DSM 20539 / JCM 16871 / CCUG 27074 / LMG 4051 / NBRC 15346 / NCIMB 9279 / VKM B-1422 / R1).